Here is a 216-residue protein sequence, read N- to C-terminus: Uracil phosphoribosyltransferase (216 aa).

Residues Arg-85, Arg-110, and 135 to 143 (DPMVATGYS) contribute to the 5-phospho-alpha-D-ribose 1-diphosphate site. Uracil is bound by residues Ile-200 and 205 to 207 (GDA). Asp-206 is a 5-phospho-alpha-D-ribose 1-diphosphate binding site.

This sequence belongs to the UPRTase family. It depends on Mg(2+) as a cofactor.

The enzyme catalyses UMP + diphosphate = 5-phospho-alpha-D-ribose 1-diphosphate + uracil. It participates in pyrimidine metabolism; UMP biosynthesis via salvage pathway; UMP from uracil: step 1/1. With respect to regulation, allosterically activated by GTP. Functionally, catalyzes the conversion of uracil and 5-phospho-alpha-D-ribose 1-diphosphate (PRPP) to UMP and diphosphate. In Burkholderia multivorans (strain ATCC 17616 / 249), this protein is Uracil phosphoribosyltransferase.